Here is a 360-residue protein sequence, read N- to C-terminus: Phospho-N-acetylmuramoyl-pentapeptide-transferase (360 aa).

Transmembrane regions (helical) follow at residues 27–47 (IVSL…MIAW), 73–93 (TMGG…WANL), 94–114 (SNPY…VGFV), 132–152 (WKYF…YAIG), 168–188 (VMPQ…VGTS), 199–219 (GLAI…AWAT), 236–256 (ASEL…FLWF), 263–283 (VFMG…IAVL), 288–308 (FLLV…ILQV), and 338–358 (VIVR…ATLK).

The protein belongs to the glycosyltransferase 4 family. MraY subfamily. The cofactor is Mg(2+).

The protein resides in the cell inner membrane. The catalysed reaction is UDP-N-acetyl-alpha-D-muramoyl-L-alanyl-gamma-D-glutamyl-meso-2,6-diaminopimeloyl-D-alanyl-D-alanine + di-trans,octa-cis-undecaprenyl phosphate = di-trans,octa-cis-undecaprenyl diphospho-N-acetyl-alpha-D-muramoyl-L-alanyl-D-glutamyl-meso-2,6-diaminopimeloyl-D-alanyl-D-alanine + UMP. It functions in the pathway cell wall biogenesis; peptidoglycan biosynthesis. Its function is as follows. Catalyzes the initial step of the lipid cycle reactions in the biosynthesis of the cell wall peptidoglycan: transfers peptidoglycan precursor phospho-MurNAc-pentapeptide from UDP-MurNAc-pentapeptide onto the lipid carrier undecaprenyl phosphate, yielding undecaprenyl-pyrophosphoryl-MurNAc-pentapeptide, known as lipid I. The protein is Phospho-N-acetylmuramoyl-pentapeptide-transferase of Pectobacterium carotovorum subsp. carotovorum (strain PC1).